We begin with the raw amino-acid sequence, 693 residues long: Elongation factor G (693 aa).

The tr-type G domain occupies 8 to 282; the sequence is EKTRNIGIMA…AVIDYLPSPL (275 aa). Residues 17–24, 81–85, and 135–138 contribute to the GTP site; these read AHIDAGKT, DTPGH, and NKMD.

This sequence belongs to the TRAFAC class translation factor GTPase superfamily. Classic translation factor GTPase family. EF-G/EF-2 subfamily.

Its subcellular location is the cytoplasm. Functionally, catalyzes the GTP-dependent ribosomal translocation step during translation elongation. During this step, the ribosome changes from the pre-translocational (PRE) to the post-translocational (POST) state as the newly formed A-site-bound peptidyl-tRNA and P-site-bound deacylated tRNA move to the P and E sites, respectively. Catalyzes the coordinated movement of the two tRNA molecules, the mRNA and conformational changes in the ribosome. This Staphylococcus carnosus (strain TM300) protein is Elongation factor G.